The sequence spans 133 residues: Hydrogenase maturation factor HypA (133 aa).

Histidine 2 contacts Ni(2+). Zn(2+) is bound by residues cysteine 73, cysteine 75, cysteine 105, and cysteine 108.

The protein belongs to the HypA/HybF family.

Functionally, involved in the maturation of [NiFe] hydrogenases. Required for nickel insertion into the metal center of the hydrogenase. In Methanosarcina acetivorans (strain ATCC 35395 / DSM 2834 / JCM 12185 / C2A), this protein is Hydrogenase maturation factor HypA.